The chain runs to 674 residues: MVVAHSAATATTTPAATVTATVVMTTATMDLRDWLFLCYGLIAFLTEVIDSTTCPSVCRCDNGFIYCNDRGLTSIPSDIPDDATTLYLQNNQINNAGIPQDLKTKVKVQVIYLYENDLDEFPINLPRSLRELHLQDNNVRTIARDSLARIPLLEKLHLDDNSVSTVSIEEDAFADSKQLKLLFLSRNHLSSIPSGLPHTLEELRLDDNRISTIPLHAFKGLNSLRRLVLDGNLLANQRIADDTFSRLQNLTELSLVRNSLAAPPLNLPSAHLQKLYLQDNAISHIPYNTLAKMRELERLDLSNNNLTTLPRGLFDDLGNLAQLLLRNNPWFCGCNLMWLRDWVRARAAVVNVRGLMCQGPEKVRGMAIKDITSEMDECFEAGSQGGAANAAAKTTVSNHASATTPQGSLFTLKAKRPGLRLPDSNIDYPMATGDGAKTLVIQVKPLTADSIRITWKAMLPASSFRLSWLRLGHSPAVGSITETLVQGDKTEYLLTALEPKSTYIICMVTMETGNTYVADETPVCAKAETADSYGPTTTLNQEQNAGPMAGLPLAGIIGGAVALVFLFLVLGAICWYVHRAGELLTRERVYNRGSRRKDDYMESGTKKDNSILEIRGPGLQMLPINPYRSKEEYVVHTIFPSNGSSLCKGAHTIGYGTTRGYREAGIPDVDYSYT.

Residues 1–51 form the signal peptide; it reads MVVAHSAATATTTPAATVTATVVMTTATMDLRDWLFLCYGLIAFLTEVIDS. At 52–552 the chain is on the extracellular side; sequence TTCPSVCRCD…QNAGPMAGLP (501 aa). 2 cysteine pairs are disulfide-bonded: Cys-54–Cys-60 and Cys-58–Cys-67. One can recognise an LRRNT domain in the interval 54 to 80; that stretch reads CPSVCRCDNGFIYCNDRGLTSIPSDIP. LRR repeat units follow at residues 81–105, 106–126, 127–149, 151–175, 176–197, 198–220, 222–246, 247–269, 270–292, and 293–316; these read DDATTLYLQNNQINNAGIPQDLKTK, VKVQVIYLYENDLDEFPINLP, RSLRELHLQDNNVRTIARDSLAR, PLLEKLHLDDNSVSTVSIEEDAFAD, SKQLKLLFLSRNHLSSIPSGLP, HTLEELRLDDNRISTIPLHAFKG, NSLRRLVLDGNLLANQRIADDTFSR, LQNLTELSLVRNSLAAPPLNLPS, AHLQKLYLQDNAISHIPYNTLAK, and MRELERLDLSNNNLTTLPRGLFDD. N-linked (GlcNAc...) asparagine glycosylation is present at Asn-305. Positions 328–379 constitute an LRRCT domain; the sequence is NPWFCGCNLMWLRDWVRARAAVVNVRGLMCQGPEKVRGMAIKDITSEMDECF. A disulfide bridge connects residues Cys-332 and Cys-357. Residues 437–532 form the Fibronectin type-III domain; that stretch reads KTLVIQVKPL…VCAKAETADS (96 aa). Residues 553-573 form a helical membrane-spanning segment; that stretch reads LAGIIGGAVALVFLFLVLGAI. Over 574-674 the chain is Cytoplasmic; it reads CWYVHRAGEL…GIPDVDYSYT (101 aa). Tyr-600, Tyr-633, and Tyr-671 each carry phosphotyrosine.

Interacts with FGFR1. Interacts (via extracellular domain) with ADGRL1/LPHN1 and ADGRL3 (via olfactomedin-like domain). Phosphorylated in response to FGFR1 signaling, but is not a direct substrate of FGFR1 or SRC. A mutant where the Tyr phosphorylation sites have been replaced by Phe displays constitutive FGFR1-dependent activation of downstream MAP kinases. Post-translationally, N-glycosylated. In terms of processing, proteolytic cleavage in the juxtamembrane region gives rise to a soluble ectodomain. Detected in brain (at protein level).

The protein resides in the cell membrane. The protein localises to the endoplasmic reticulum membrane. Its subcellular location is the cytoplasmic vesicle membrane. It localises to the cytoplasm. It is found in the perinuclear region. The protein resides in the cell junction. The protein localises to the focal adhesion. Its subcellular location is the secreted. It localises to the cell projection. It is found in the neuron projection. In terms of biological role, plays a role in fibroblast growth factor-mediated signaling cascades that lead to the activation of MAP kinases. Promotes neurite outgrowth via FGFR1-mediated activation of downstream MAP kinases. Promotes an increase both in neurite number and in neurite length. May play a role in cell-cell adhesion and cell guidance via its interaction with ADGRL1/LPHN1 and ADGRL3. This Mus musculus (Mouse) protein is Leucine-rich repeat transmembrane protein FLRT1.